The primary structure comprises 34 residues: Mu-conotoxin GS (34 aa).

3 disulfides stabilise this stretch: Cys-2/Cys-14, Cys-9/Cys-19, and Cys-13/Cys-27. 4-hydroxyproline occurs at positions 10 and 11. Position 32 is a 4-carboxyglutamate (Glu-32).

Expressed by the venom duct.

Its subcellular location is the secreted. Its function is as follows. Mu-conotoxins block voltage-gated sodium channels (Nav). No effect was observed upon injections into mice and goldfish (25 ug). This Conus geographus (Geography cone) protein is Mu-conotoxin GS.